Consider the following 452-residue polypeptide: UDP-N-acetylmuramoylalanine--D-glutamate ligase (452 aa).

119 to 125 (GSNGKTT) lines the ATP pocket.

The protein belongs to the MurCDEF family.

It is found in the cytoplasm. The enzyme catalyses UDP-N-acetyl-alpha-D-muramoyl-L-alanine + D-glutamate + ATP = UDP-N-acetyl-alpha-D-muramoyl-L-alanyl-D-glutamate + ADP + phosphate + H(+). It participates in cell wall biogenesis; peptidoglycan biosynthesis. Cell wall formation. Catalyzes the addition of glutamate to the nucleotide precursor UDP-N-acetylmuramoyl-L-alanine (UMA). The sequence is that of UDP-N-acetylmuramoylalanine--D-glutamate ligase from Streptococcus equi subsp. zooepidemicus (strain MGCS10565).